The chain runs to 360 residues: Putative agmatine deiminase (360 aa).

C353 functions as the Amidino-cysteine intermediate in the catalytic mechanism.

The protein belongs to the agmatine deiminase family.

It catalyses the reaction agmatine + H2O = N-carbamoylputrescine + NH4(+). This chain is Putative agmatine deiminase, found in Vibrio parahaemolyticus serotype O3:K6 (strain RIMD 2210633).